A 127-amino-acid chain; its full sequence is Protein B20 (127 aa).

The segment at 86-127 is disordered; it reads DRTGMNSESDSESDNISIKTEYENEYEFYDETQDQSTQHNDL. Acidic residues predominate over residues 108 to 118; the sequence is ENEYEFYDETQ.

The polypeptide is Protein B20 (Homo sapiens (Human)).